A 655-amino-acid chain; its full sequence is p-hydroxybenzoic acid efflux pump subunit AaeB (655 aa).

11 helical membrane-spanning segments follow: residues 13-33 (FAVK…HFQL), 38-58 (WAVL…GGEP), 69-89 (LRII…IAMI), 93-113 (LLMI…SSLV), 121-141 (WGLA…EPLL), 152-172 (EIVI…PRSI), 370-390 (LFWL…IAVV), 407-427 (FIYG…VIIP), 431-451 (QSML…GIEV), 459-479 (MGAL…TFHF), and 482-502 (FLDS…VILL).

It belongs to the aromatic acid exporter ArAE (TC 2.A.85) family.

Its subcellular location is the cell inner membrane. Its function is as follows. Forms an efflux pump with AaeA. Could function as a metabolic relief valve, allowing to eliminate certain compounds when they accumulate to high levels in the cell. The sequence is that of p-hydroxybenzoic acid efflux pump subunit AaeB from Escherichia coli O81 (strain ED1a).